The chain runs to 118 residues: cAMP-responsive element-binding protein-like 2 (118 aa).

The tract at residues 1 to 25 (MDDSKVSGGKVKKPGKRGRKPAKID) is disordered. The span at 10-21 (KVKKPGKRGRKP) shows a compositional bias: basic residues. Residues 23–86 (KIDLKAKLER…AAMDQGKIPS (64 aa)) form the bZIP domain. The basic motif stretch occupies residues 29–60 (KLERSRQSARECRARKKLRYQYLEELVSSRER). Residues 62 to 69 (ICALREEL) are leucine-zipper.

Belongs to the bZIP family. ATF subfamily.

The protein resides in the nucleus. In terms of biological role, probable regulator of creb1 transcriptional activity which is involved in adipose cells differentiation. May also play a regulatory role in the cell cycle. The polypeptide is cAMP-responsive element-binding protein-like 2 (crebl2) (Xenopus tropicalis (Western clawed frog)).